A 331-amino-acid chain; its full sequence is 6-phosphogluconolactonase (331 aa).

Position 287 is an N6-acetyllysine (Lys287).

This sequence belongs to the cycloisomerase 2 family.

It carries out the reaction 6-phospho-D-glucono-1,5-lactone + H2O = 6-phospho-D-gluconate + H(+). It functions in the pathway carbohydrate degradation; pentose phosphate pathway; D-ribulose 5-phosphate from D-glucose 6-phosphate (oxidative stage): step 2/3. Its function is as follows. Catalyzes the hydrolysis of 6-phosphogluconolactone to 6-phosphogluconate. This chain is 6-phosphogluconolactonase, found in Escherichia coli O127:H6 (strain E2348/69 / EPEC).